The chain runs to 80 residues: uncharacterized protein (80 aa).

It belongs to the BolA/IbaG family.

This is an uncharacterized protein from Buchnera aphidicola subsp. Schizaphis graminum (strain Sg).